A 1349-amino-acid polypeptide reads, in one-letter code: MVEHDKSGSKRQELRSNMRNLITLNKGKFKPTASTAEGDEDDLSFTLLDSVFDTLSDSITCVLGSTDIGAIEVQQFMKDGSRNVLASFNIQTFDDKLLSFVHFADINQLVFVFEQGDIITATYDPVSLDPAETLIEIMGTIDNGIAAAQWSYDEETLAMVTKDRNVVVLSKLFEPISEYHLEVDDLKISKHVTVGWGKKETQFRGKGARAMEREALASLKASGLVGNQLRDPTMPYMVDTGDVTALDSHEITISWRGDCDYFAVSSVEEVPDEDDETKSIKRRAFRVFSREGQLDSASEPVTGMEHQLSWKPQGSLIASIQRKTDLGEEDSVDVIFFERNGLRHGEFDTRLPLDEKVESVCWNSNSEALAVVLANRIQLWTSKNYHWYLKQELYASDISYVKWHPEKDFTLMFSDAGFINIVDFAYKMAQGPTLEPFDNGTSLVVDGRTVNITPLALANVPPPMYYRDFETPGNVLDVACSFSNEIYAAINKDVLIFAAVPSIEEMKKGKHPSIVCEFPKSEFTSEVDSLRQVAFINDSIVGVLLDTDNLSRIALLDIQDITQPTLITIVEVYDKIVLLRSDFDYNHLVYETRDGTVCQLDAEGQLMEITKFPQLVRDFRVKRVHNTSAEDDDNWSAESSELVAFGITNNGKLFANQVLLASAVTSLEITDSFLLFTTAQHNLQFVHLNSTDFKPLPLVEEGVEDERVRAIERGSILVSVIPSKSSVVLQATRGNLETIYPRIMVLAEVRKNIMAKRYKEAFIVCRTHRINLDILHDYAPELFIENLEVFINQIGRVDYLNLFISCLSEDDVTKTKYKETLYSGISKSFGMEPAPLTEMQIYMKKKMFDPKTSKVNKICDAVLNVLLSNPEYKKKYLQTIITAYASQNPQNLSAALKLISELENSEEKDSCVTYLCFLQDVNVVYKSALSLYDVSLALLVAQKSQMDPREYLPFLQELQDNEPLRRKFLIDDYLGNYEKALEHLSEIDKDGNVSEEVIDYVESHDLYKHGLALYRYDSEKQNVIYNIYAKHLSSNQMYTDAAVAYEMLGKLKEAMGAYQSAKRWREAMSIAVQKFPEEVESVAEELISSLTFEHRYVDAADIQLEYLDNVKEAVALYCKAYRYDIASLVAIKAKKDELLEEVVDPGLGEGFGIIAELLADCKGQINSQLRRLRELRAKKEENPYAFYGQETEQADDVSVAPSETSTQESFFTRYTGKTGGTAKTGASRRTAKNKRREERKRARGKKGTIYEEEYLVQSVGRLIERLNQTKPDAVRVVEGLCRRNMREQAHQIQKNFVEVLDLLKANVKEIYSISEKDRERVNENGEVYYIPEIPVPEIHDFPKSHIVDF.

5 positions are modified to phosphoserine: Ser-529, Ser-539, Ser-551, Ser-636, and Ser-828. The tract at residues 919 to 1349 is mediates dimerization; it reads QDVNVVYKSA…DFPKSHIVDF (431 aa). Residues Ser-1198 and Ser-1202 each carry the phosphoserine; by HRR25 modification. Ser-1205 and Ser-1209 each carry phosphoserine. Low complexity predominate over residues 1214–1228; that stretch reads YTGKTGGTAKTGASR. The interval 1214–1245 is disordered; sequence YTGKTGGTAKTGASRRTAKNKRREERKRARGK. The tract at residues 1228-1246 is required for binding to tRNA; sequence RRTAKNKRREERKRARGKK.

This sequence belongs to the ELP1/IKA1 family. In terms of assembly, homodimer; dimerization promotes ELP1/IKI3 stability and elongator complex formation. Component of the elongator complex which consists of ELP1/IKI3, ELP2, ELP3, ELP4, ELP5/IKI1 and ELP6. The elongator complex is composed of two copies of the Elp123 subcomplex (composed of ELP1/IKI3, ELP2 and ELP3) and two copies of the Elp456 subcomplex (composed of ELP4, ELP5/IKI1 and ELP6). The Elp123 subcomplex forms a two-lobed scaffold, which binds the Elp456 subcomplex asymmetrically. In the complex, ELP1/IKI3 interacts with ELP2. In each lobe, ELP2 is tightly sandwiched between ELP1/IKI3 and ELP3. The Elp123 subcomplex binds tRNA through ELP1/IKI3 and ELP3 and can bind 2 tRNAs simultaneously. tRNA-binding induces conformational rearrangements which precisely position the targeted anticodon base in the active site. The Elp456 subcomplex binds tRNA and has ATPase activity. ELP1/IKI3 interacts with HRR25 and KTI12. Interacts with KTI11/DPH3. In terms of processing, phosphorylation promotes the tRNA modification function of the elongator complex.

The protein localises to the cytoplasm. It is found in the nucleus. It participates in tRNA modification; 5-methoxycarbonylmethyl-2-thiouridine-tRNA biosynthesis. Its function is as follows. Component of the elongator complex which is required for multiple tRNA modifications, including mcm5U (5-methoxycarbonylmethyl uridine), mcm5s2U (5-methoxycarbonylmethyl-2-thiouridine), and ncm5U (5-carbamoylmethyl uridine). The elongator complex catalyzes formation of carboxymethyluridine in the wobble base at position 34 in tRNAs. Functions as a gamma-toxin target (TOT); disruption of the complex confers resistance to Kluyveromyces lactis toxin zymocin (pGKL1 killer toxin). May also be involved in sensitivity to Pichia inositovora toxin. ELP1/IKI3 binds to tRNA, mediating interaction of the elongator complex with tRNA. Independently, may be involved in polarized exocytosis. In Saccharomyces cerevisiae (strain ATCC 204508 / S288c) (Baker's yeast), this protein is Elongator complex protein 1 (IKI3).